The primary structure comprises 315 residues: tRNA pseudouridine synthase B (315 aa).

Asp-54 functions as the Nucleophile in the catalytic mechanism.

The protein belongs to the pseudouridine synthase TruB family. Type 1 subfamily.

It carries out the reaction uridine(55) in tRNA = pseudouridine(55) in tRNA. Responsible for synthesis of pseudouridine from uracil-55 in the psi GC loop of transfer RNAs. This Agrobacterium fabrum (strain C58 / ATCC 33970) (Agrobacterium tumefaciens (strain C58)) protein is tRNA pseudouridine synthase B.